The sequence spans 377 residues: D-alanine--D-alanine ligase (377 aa).

In terms of domain architecture, ATP-grasp spans Lys137–Gln346. Ser167–Leu222 lines the ATP pocket. Positions 300, 313, and 315 each coordinate Mg(2+).

It belongs to the D-alanine--D-alanine ligase family. Requires Mg(2+) as cofactor. The cofactor is Mn(2+).

The protein resides in the cytoplasm. The enzyme catalyses 2 D-alanine + ATP = D-alanyl-D-alanine + ADP + phosphate + H(+). The protein operates within cell wall biogenesis; peptidoglycan biosynthesis. Cell wall formation. The chain is D-alanine--D-alanine ligase from Oenococcus oeni (strain ATCC BAA-331 / PSU-1).